A 342-amino-acid chain; its full sequence is UDP-3-O-acylglucosamine N-acyltransferase (342 aa).

His253 acts as the Proton acceptor in catalysis.

Belongs to the transferase hexapeptide repeat family. LpxD subfamily. As to quaternary structure, homotrimer.

It catalyses the reaction a UDP-3-O-[(3R)-3-hydroxyacyl]-alpha-D-glucosamine + a (3R)-hydroxyacyl-[ACP] = a UDP-2-N,3-O-bis[(3R)-3-hydroxyacyl]-alpha-D-glucosamine + holo-[ACP] + H(+). Its pathway is bacterial outer membrane biogenesis; LPS lipid A biosynthesis. Catalyzes the N-acylation of UDP-3-O-acylglucosamine using 3-hydroxyacyl-ACP as the acyl donor. Is involved in the biosynthesis of lipid A, a phosphorylated glycolipid that anchors the lipopolysaccharide to the outer membrane of the cell. This is UDP-3-O-acylglucosamine N-acyltransferase from Rickettsia canadensis (strain McKiel).